A 251-amino-acid chain; its full sequence is Cell division protein ZapD (251 aa).

It belongs to the ZapD family. Interacts with FtsZ.

Its subcellular location is the cytoplasm. Functionally, cell division factor that enhances FtsZ-ring assembly. Directly interacts with FtsZ and promotes bundling of FtsZ protofilaments, with a reduction in FtsZ GTPase activity. This is Cell division protein ZapD from Paraburkholderia xenovorans (strain LB400).